Reading from the N-terminus, the 338-residue chain is Bacteriochlorophyllide d C-20 methyltransferase (338 aa).

Glu-147 contacts S-adenosyl-L-methionine. Position 150 (His-150) interacts with substrate. Residues Gly-177, Asn-200, 227–228 (DI), and 242–243 (CR) each bind S-adenosyl-L-methionine. The Nucleophile role is filled by Tyr-246. His-290 contributes to the a bacteriochlorophyll d binding site.

It belongs to the class I-like SAM-binding methyltransferase superfamily. Cation-independent O-methyltransferase family. Homodimer.

The catalysed reaction is a bacteriochlorophyllide d + S-adenosyl-L-methionine = a bacteriochlorophyllide c + S-adenosyl-L-homocysteine + H(+). It participates in porphyrin-containing compound metabolism; bacteriochlorophyll biosynthesis (light-independent). Involved in the biosynthesis of the major light-harvesting pigment bacteriochlorophyll c (BChlc), which confers a significant competitive advantage to green sulfur bacteria living at limiting red and near-infrared light intensities. Catalyzes the methylation at the C-20 position of the cyclic tetrapyrrole chlorin of bacteriochlorophyll d (BChld) to produce bacteriochlorophyll c (BChlc) using S-adenosylmethionine (SAM) as a methyl source. The protein is Bacteriochlorophyllide d C-20 methyltransferase of Chlorobaculum tepidum (strain ATCC 49652 / DSM 12025 / NBRC 103806 / TLS) (Chlorobium tepidum).